The following is a 118-amino-acid chain: MAGNQRQGVAFIRVNGMELESMEGASFTPSGITREEVTGSRVYGWKGKPRAAKVECKIPGGGPIGLDEIIDWENITVEFQADTGETWMLANAWQADEPKNDGGEISLVLMAKQSKRIA.

As to quaternary structure, homomultimer.

The protein localises to the virion. Its subcellular location is the host cytoplasm. Functionally, polymerizes to make up the central tail tube that is surrounded by the tail sheath protein (TSP). Tail tube protein polymerization takes place around the tape measure protein (TMP) and is probably directed by chaperone proteins. Upon binding to host cell, the tail sheath contracts and the tail tube penetrates the host envelope. The tail tube is involved in viral genome delivery during ejection. This is Tail tube protein (M) from Enterobacteriaceae (Bacteriophage Mu).